The sequence spans 191 residues: Fe/S biogenesis protein NfuA (191 aa).

[4Fe-4S] cluster is bound by residues C149 and C152.

This sequence belongs to the NfuA family. In terms of assembly, homodimer. [4Fe-4S] cluster serves as cofactor.

In terms of biological role, involved in iron-sulfur cluster biogenesis. Binds a 4Fe-4S cluster, can transfer this cluster to apoproteins, and thereby intervenes in the maturation of Fe/S proteins. Could also act as a scaffold/chaperone for damaged Fe/S proteins. This chain is Fe/S biogenesis protein NfuA, found in Klebsiella pneumoniae (strain 342).